A 179-amino-acid polypeptide reads, in one-letter code: Large ribosomal subunit protein uL5 (179 aa).

The protein belongs to the universal ribosomal protein uL5 family. As to quaternary structure, part of the 50S ribosomal subunit; part of the 5S rRNA/L5/L18/L25 subcomplex. Contacts the 5S rRNA and the P site tRNA. Forms a bridge to the 30S subunit in the 70S ribosome.

Its function is as follows. This is one of the proteins that bind and probably mediate the attachment of the 5S RNA into the large ribosomal subunit, where it forms part of the central protuberance. In the 70S ribosome it contacts protein S13 of the 30S subunit (bridge B1b), connecting the 2 subunits; this bridge is implicated in subunit movement. Contacts the P site tRNA; the 5S rRNA and some of its associated proteins might help stabilize positioning of ribosome-bound tRNAs. This is Large ribosomal subunit protein uL5 from Ectopseudomonas mendocina (strain ymp) (Pseudomonas mendocina).